The sequence spans 494 residues: Aspartyl/glutamyl-tRNA(Asn/Gln) amidotransferase subunit B (494 aa).

It belongs to the GatB/GatE family. GatB subfamily. In terms of assembly, heterotrimer of A, B and C subunits.

It catalyses the reaction L-glutamyl-tRNA(Gln) + L-glutamine + ATP + H2O = L-glutaminyl-tRNA(Gln) + L-glutamate + ADP + phosphate + H(+). The catalysed reaction is L-aspartyl-tRNA(Asn) + L-glutamine + ATP + H2O = L-asparaginyl-tRNA(Asn) + L-glutamate + ADP + phosphate + 2 H(+). Functionally, allows the formation of correctly charged Asn-tRNA(Asn) or Gln-tRNA(Gln) through the transamidation of misacylated Asp-tRNA(Asn) or Glu-tRNA(Gln) in organisms which lack either or both of asparaginyl-tRNA or glutaminyl-tRNA synthetases. The reaction takes place in the presence of glutamine and ATP through an activated phospho-Asp-tRNA(Asn) or phospho-Glu-tRNA(Gln). The sequence is that of Aspartyl/glutamyl-tRNA(Asn/Gln) amidotransferase subunit B from Nitrobacter hamburgensis (strain DSM 10229 / NCIMB 13809 / X14).